The sequence spans 1802 residues: Transposon Ty4-H Gag-Pol polyprotein (1802 aa).

Positions 39–115 (RKVSIKDEQV…IQLLETNENN (77 aa)) form a coiled coil. The tract at residues 381-501 (NNNLSPVQNE…KTKMVLSRKY (121 aa)) is ty4 protease. Asp414 functions as the For protease activity; shared with dimeric partner in the catalytic mechanism. The integrase-type zinc finger-like stretch occupies residues 539–599 (AIKPTSSPGF…EPNEFWCQTC (61 aa)). One can recognise an Integrase catalytic domain in the interval 619-786 (TDHEPGSSWC…LPLKAISRQP (168 aa)). Mg(2+) is bound by residues Asp630 and Asp695. A disordered region spans residues 1223-1248 (KRKRKRHDKNNSLTSYELERDKKRSK). The Reverse transcriptase Ty1/copia-type domain occupies 1375-1510 (RNMFMKTLDI…DILGMDLVYN (136 aa)). Positions 1383, 1462, 1463, 1644, 1686, and 1720 each coordinate Mg(2+). Residues 1644-1790 (DASVGSEYDA…KRFIQVLKNK (147 aa)) form the RNase H Ty1/copia-type domain.

In terms of assembly, the protease is a homodimer, whose active site consists of two apposed aspartic acid residues. Proteolytically processed into capsid protein (CA), Ty4 protease (PR), integrase (IN) and reverse transcriptase/ribonuclease H (RT) proteins. Initially, virus-like particles (VLPs) are composed of the structural unprocessed proteins Gag and Gag-Pol, and also contain the host initiator methionine tRNA (tRNA(i)-Met) which serves as a primer for minus-strand DNA synthesis, and a dimer of genomic Ty RNA. Processing of the polyproteins occurs within the particle and proceeds by an ordered pathway, called maturation. First, the protease (PR) is released by autocatalytic cleavage of the Gag-Pol polyprotein, and this cleavage is a prerequisite for subsequent processing at the remaining sites to release the mature structural and catalytic proteins. Maturation takes place prior to the RT reaction and is required to produce transposition-competent VLPs.

The protein localises to the cytoplasm. The protein resides in the nucleus. The enzyme catalyses DNA(n) + a 2'-deoxyribonucleoside 5'-triphosphate = DNA(n+1) + diphosphate. It carries out the reaction Endonucleolytic cleavage to 5'-phosphomonoester.. Capsid protein (CA) is the structural component of the virus-like particle (VLP), forming the shell that encapsulates the retrotransposons dimeric RNA genome. Functionally, the aspartyl protease (PR) mediates the proteolytic cleavages of the Gag and Gag-Pol polyproteins after assembly of the VLP. Its function is as follows. Reverse transcriptase/ribonuclease H (RT) is a multifunctional enzyme that catalyzes the conversion of the retro-elements RNA genome into dsDNA within the VLP. The enzyme displays a DNA polymerase activity that can copy either DNA or RNA templates, and a ribonuclease H (RNase H) activity that cleaves the RNA strand of RNA-DNA heteroduplexes during plus-strand synthesis and hydrolyzes RNA primers. The conversion leads to a linear dsDNA copy of the retrotransposon that includes long terminal repeats (LTRs) at both ends. In terms of biological role, integrase (IN) targets the VLP to the nucleus, where a subparticle preintegration complex (PIC) containing at least integrase and the newly synthesized dsDNA copy of the retrotransposon must transit the nuclear membrane. Once in the nucleus, integrase performs the integration of the dsDNA into the host genome. The protein is Transposon Ty4-H Gag-Pol polyprotein (TY4B-H) of Saccharomyces cerevisiae (strain ATCC 204508 / S288c) (Baker's yeast).